Reading from the N-terminus, the 689-residue chain is Protein-glutamine gamma-glutamyltransferase 2 (689 aa).

Residues Cys278, His336, and Asp359 contribute to the active site. Residues Asn399, Asp401, Glu437, Glu447, and Glu452 each coordinate Ca(2+). The tract at residues 427-453 (STKSVGRDSREDITHTYKYPEGSEKER) is disordered. The segment covering 431-441 (VGRDSREDITH) has biased composition (basic and acidic residues). GTP is bound at residue 476–483 (RIKLSEGA). Glu539 serves as a coordination point for Ca(2+). Residue 580 to 583 (RDVY) coordinates GTP.

This sequence belongs to the transglutaminase superfamily. Transglutaminase family. In terms of assembly, monomer. Requires Ca(2+) as cofactor. Predominates in mature erythrocytes. Also found in kidney and cardiac muscle.

Its subcellular location is the cytoplasm. It is found in the cytosol. The protein localises to the nucleus. It localises to the chromosome. The protein resides in the secreted. Its subcellular location is the extracellular space. It is found in the extracellular matrix. The protein localises to the cell membrane. It localises to the mitochondrion. It catalyses the reaction L-glutaminyl-[protein] + L-lysyl-[protein] = [protein]-L-lysyl-N(6)-5-L-glutamyl-[protein] + NH4(+). The enzyme catalyses L-glutaminyl-[protein] + serotonin = 5-serotonyl-L-glutamyl-[protein] + NH4(+). The catalysed reaction is L-glutaminyl-[protein] + dopamine = 5-dopaminyl-L-glutamyl-[protein] + NH4(+). It carries out the reaction L-glutaminyl-[protein] + histamine = 5-histaminyl-L-glutamyl-[protein] + NH4(+). It catalyses the reaction L-glutaminyl-[protein] + (R)-noradrenaline = 5-(R)-noradrenalinyl-L-glutamyl-[protein] + NH4(+). The enzyme catalyses L-glutaminyl-[protein] + H2O = L-glutamyl-[protein] + NH4(+). With respect to regulation, acyltransferase activity is regulated by the binding of GTP and Ca(2+): inactivated by GTP, which stabilizes its closed structure, thereby obstructing the accessibility of substrates to the active sites. In contrast, Ca(2+) acts as a cofactor by inducing conformational change to the active open form. In absence of Ca(2+), Mg(2+) may bind Ca(2+)-binding sites, promoting GTP-binding and subsequent inhibition of the acyltransferase activity. In terms of biological role, calcium-dependent acyltransferase that catalyzes the formation of covalent bonds between peptide-bound glutamine and various primary amines, such as gamma-amino group of peptide-bound lysine, or mono- and polyamines, thereby producing cross-linked or aminated proteins, respectively. Involved in many biological processes, such as bone development, angiogenesis, wound healing, cellular differentiation, chromatin modification and apoptosis. Acts as a protein-glutamine gamma-glutamyltransferase by mediating the cross-linking of proteins: under physiological conditions, the protein cross-linking activity is inhibited by GTP; inhibition is relieved by Ca(2+) in response to various stresses. When secreted, catalyzes cross-linking of proteins of the extracellular matrix, resulting in the formation of scaffolds. Plays a key role during apoptosis, both by (1) promoting the cross-linking of cytoskeletal proteins resulting in condensation of the cytoplasm, and by (2) mediating cross-linking proteins of the extracellular matrix, resulting in the irreversible formation of scaffolds that stabilize the integrity of the dying cells before their clearance by phagocytosis, thereby preventing the leakage of harmful intracellular components. In addition to protein cross-linking, can use different monoamine substrates to catalyze a vast array of protein post-translational modifications: mediates aminylation of serotonin, dopamine, noradrenaline or histamine into glutamine residues of target proteins to generate protein serotonylation, dopaminylation, noradrenalinylation or histaminylation, respectively. Mediates protein serotonylation of small GTPases during activation and aggregation of platelets, leading to constitutive activation of these GTPases. Plays a key role in chromatin organization by mediating serotonylation and dopaminylation of histone H3. Catalyzes serotonylation of 'Gln-5' of histone H3 (H3Q5ser) during serotonergic neuron differentiation, thereby facilitating transcription. Acts as a mediator of neurotransmission-independent role of nuclear dopamine in ventral tegmental area (VTA) neurons: catalyzes dopaminylation of 'Gln-5' of histone H3 (H3Q5dop), thereby regulating relapse-related transcriptional plasticity in the reward system. Also acts as a protein deamidase by mediating the side chain deamidation of specific glutamine residues of proteins to glutamate. May also act as an isopeptidase cleaving the previously formed cross-links. Also able to participate in signaling pathways independently of its acyltransferase activity: acts as a signal transducer in alpha-1 adrenergic receptor-mediated stimulation of phospholipase C-delta (PLCD) activity and is required for coupling alpha-1 adrenergic agonists to the stimulation of phosphoinositide lipid metabolism. The polypeptide is Protein-glutamine gamma-glutamyltransferase 2 (Gallus gallus (Chicken)).